A 433-amino-acid chain; its full sequence is Steroid hormone receptor ERR2 (433 aa).

Residues 1–41 form a disordered region; that stretch reads MSSEDRHLGSSCGSFIKTEPSSPSSGIDALSHHSPSGSSDA. Low complexity predominate over residues 32-41; it reads HHSPSGSSDA. The interval 93 to 211 is interaction with NANOG; sequence YMLNAIPKRL…SPPAKKPLTK (119 aa). The segment at residues 100 to 186 is a DNA-binding region (nuclear receptor); that stretch reads KRLCLVCGDI…RVRGGRQKYK (87 aa). NR C4-type zinc fingers lie at residues 103–123 and 139–163; these read CLVC…CEAC and CPAT…FMKC. An essential for ESRRB transcriptional activity and interaction with NCOA3 region spans residues 203-433; it reads PPAKKPLTKI…LFLEMLEAKV (231 aa). Residues 208-432 enclose the NR LBD domain; it reads PLTKIVSYLL…KLFLEMLEAK (225 aa).

This sequence belongs to the nuclear hormone receptor family. NR3 subfamily. In terms of assembly, binds DNA as a monomer. Interacts with NR0B1; represses ESRRB activity at the GATA6 promoter. Interacts with NANOG; reciprocally modulates their transcriptional activities and activates POU5F1 expression. Interacts with NCOA3; mediates the interaction between ESRRB and RNA polymerase II complexes and allows NCOA3 corecruitment to ESRRB, KLF4, NANOG, and SOX2 enhancer regions to trigger ESRRB-dependent gene activation involved in self-renewal and pluripotency. Interacts with KDM1A; co-occupes the core set of ESRRB targets including ELF5 and EOMES. Interacts with the multiprotein complex Integrator, at least composed of INTS1, INTS2, INTS3, INTS4, INTS5, INTS6, INTS7, INTS8, INTS9/RC74, INTS10, INTS11/CPSF3L and INTS12; ESRRB is probably not a core component of the integrator complex and associates to integrator via its interaction with INTS1 and INTS9; attracts the transcriptional machinery. Interacts with JARID2. Interacts with POU5F1; recruits ESRRB near the POU5F1-SOX2 element in the NANOG proximal promoter leading to activation of NANOG expression; the interaction is DNA independent. In terms of processing, acetylated by PCAF/KAT2 (in vitro).

The protein resides in the nucleus. It is found in the cytoplasm. The protein localises to the chromosome. Its function is as follows. Transcription factor that binds a canonical ESRRB recognition (ERRE) sequence 5'TCAAGGTCA-3' localized on promoter and enhancer of targets genes regulating their expression or their transcription activity. Plays a role, in a LIF independent manner, in maintainance of self-renewal and pluripotency of embryonic and trophoblast stem cells through different signaling pathways including FGF signaling pathway and Wnt signaling pathways. Involved in morula development (2-16 cells embryos) by acting as a regulator at the 8-cell stage. Upon FGF signaling pathway activation, interacts with KDM1A by directly binding to enhancer site of ELF5 and EOMES and activating their transcription leading to self-renewal of trophoblast stem cells. Also regulates expression of multiple rod-specific genes and is required for survival of this cell type. Plays a role as transcription factor activator of GATA6, NR0B1, POU5F1 and PERM1. Plays a role as transcription factor repressor of NFE2L2 transcriptional activity and ESR1 transcriptional activity. During mitosis remains bound to a subset of interphase target genes, including pluripotency regulators, through the canonical ESRRB recognition (ERRE) sequence, leading to their transcriptional activation in early G1 phase. Can coassemble on structured DNA elements with other transcription factors like SOX2, POU5F1, KDM1A and NCOA3 to trigger ESRRB-dependent gene activation. This mechanism, in the case of SOX2 corecruitment prevents the embryonic stem cells (ESCs) to epiblast stem cells (EpiSC) transition through positive regulation of NR0B1 that inhibits the EpiSC transcriptional program. Also plays a role inner ear development by controlling expression of ion channels and transporters and in early placentation. This is Steroid hormone receptor ERR2 from Rattus norvegicus (Rat).